A 1551-amino-acid polypeptide reads, in one-letter code: Pentafunctional AROM polypeptide 1 (1551 aa).

The segment at 1 to 379 is 3-dehydroquinate synthase; the sequence is MSIEKVSILG…YESKAHQIFK (379 aa). Residues 42 to 44, 80 to 83, 111 to 113, and Asp-116 contribute to the NAD(+) site; these read DTN, ENHK, and GGV. 7-phospho-2-dehydro-3-deoxy-D-arabino-heptonate is bound at residue Arg-127. Residue 136–137 participates in NAD(+) binding; it reads TT. Positions 143 and 149 each coordinate 7-phospho-2-dehydro-3-deoxy-D-arabino-heptonate. Lys-158 contacts NAD(+). Asn-159 is a 7-phospho-2-dehydro-3-deoxy-D-arabino-heptonate binding site. Residues 176-179 and Asn-187 contribute to the NAD(+) site; that span reads FLQT. Zn(2+) is bound at residue Glu-191. 7-phospho-2-dehydro-3-deoxy-D-arabino-heptonate-binding positions include 191–194 and Lys-243; that span reads EVVK. The Proton acceptor; for 3-dehydroquinate synthase activity role is filled by Glu-253. Residues 257 to 261 and His-264 each bind 7-phospho-2-dehydro-3-deoxy-D-arabino-heptonate; that span reads RNLLN. His-264 is a binding site for Zn(2+). Catalysis depends on His-268, which acts as the Proton acceptor; for 3-dehydroquinate synthase activity. His-280 and Lys-351 together coordinate 7-phospho-2-dehydro-3-deoxy-D-arabino-heptonate. His-280 contacts Zn(2+). Positions 392–835 are EPSP synthase; that stretch reads VHPFANRHPE…WDVLHSKFNA (444 aa). The shikimate kinase stretch occupies residues 854 to 1044; the sequence is DRSIVIIGMR…LPATRSTFVT (191 aa). 861–868 contributes to the ATP binding site; that stretch reads GMRAAGKT. Positions 1045 to 1258 are 3-dehydroquinase; it reads LTYPDLRKVP…IGVGQLSLKE (214 aa). Catalysis depends on His-1162, which acts as the Proton acceptor; for 3-dehydroquinate dehydratase activity. Lys-1191 functions as the Schiff-base intermediate with substrate; for 3-dehydroquinate dehydratase activity in the catalytic mechanism. A shikimate dehydrogenase region spans residues 1271-1551; the sequence is EKEFWVVGSP…KVIHSAVLNE (281 aa).

It in the N-terminal section; belongs to the sugar phosphate cyclases superfamily. Dehydroquinate synthase family. The protein in the 2nd section; belongs to the EPSP synthase family. In the 3rd section; belongs to the shikimate kinase family. This sequence in the 4th section; belongs to the type-I 3-dehydroquinase family. It in the C-terminal section; belongs to the shikimate dehydrogenase family. Homodimer. Zn(2+) serves as cofactor.

Its subcellular location is the cytoplasm. The enzyme catalyses 7-phospho-2-dehydro-3-deoxy-D-arabino-heptonate = 3-dehydroquinate + phosphate. It catalyses the reaction 3-dehydroquinate = 3-dehydroshikimate + H2O. It carries out the reaction shikimate + NADP(+) = 3-dehydroshikimate + NADPH + H(+). The catalysed reaction is shikimate + ATP = 3-phosphoshikimate + ADP + H(+). The enzyme catalyses 3-phosphoshikimate + phosphoenolpyruvate = 5-O-(1-carboxyvinyl)-3-phosphoshikimate + phosphate. It participates in metabolic intermediate biosynthesis; chorismate biosynthesis; chorismate from D-erythrose 4-phosphate and phosphoenolpyruvate: step 2/7. It functions in the pathway metabolic intermediate biosynthesis; chorismate biosynthesis; chorismate from D-erythrose 4-phosphate and phosphoenolpyruvate: step 3/7. Its pathway is metabolic intermediate biosynthesis; chorismate biosynthesis; chorismate from D-erythrose 4-phosphate and phosphoenolpyruvate: step 4/7. The protein operates within metabolic intermediate biosynthesis; chorismate biosynthesis; chorismate from D-erythrose 4-phosphate and phosphoenolpyruvate: step 5/7. It participates in metabolic intermediate biosynthesis; chorismate biosynthesis; chorismate from D-erythrose 4-phosphate and phosphoenolpyruvate: step 6/7. Functionally, the AROM polypeptide catalyzes 5 consecutive enzymatic reactions in prechorismate polyaromatic amino acid biosynthesis. The polypeptide is Pentafunctional AROM polypeptide 1 (Lodderomyces elongisporus (strain ATCC 11503 / CBS 2605 / JCM 1781 / NBRC 1676 / NRRL YB-4239) (Yeast)).